A 213-amino-acid polypeptide reads, in one-letter code: Peptidoglycan-N-acetylglucosamine deacetylase BC_3618 (213 aa).

The NodB homology domain maps to 22-203; it reads KIIAITFDDG…ELKKQGYRFV (182 aa). Asp29 (proton acceptor) is an active-site residue. Zn(2+) is bound by residues Asp30, His80, and His84. Catalysis depends on His175, which acts as the Proton donor.

It belongs to the polysaccharide deacetylase family. Zn(2+) serves as cofactor.

The enzyme catalyses peptidoglycan-N-acetyl-D-glucosamine + H2O = peptidoglycan-D-glucosamine + acetate.. Its activity is regulated as follows. Inhibited by CuCl(2) and ZnCl(2). Catalyzes the deacetylation of N-acetylglucosamine (GlcNAc) residues in peptidoglycan. Also acts on soluble chitin substrates and N-acetylchitooligomers. Acts on cell wall peptidoglycan from the Gram-positive bacteria B.cereus and B.subtilis and the Gram-negative bacterium H.pylori. Not active on acetylated xylan. The sequence is that of Peptidoglycan-N-acetylglucosamine deacetylase BC_3618 from Bacillus cereus (strain ATCC 14579 / DSM 31 / CCUG 7414 / JCM 2152 / NBRC 15305 / NCIMB 9373 / NCTC 2599 / NRRL B-3711).